Consider the following 571-residue polypeptide: uncharacterized protein (571 aa).

At 1-3 (MNS) the chain is on the cytoplasmic side. Residues 4-24 (LQILSFVGFTLLVAVITWWKV) traverse the membrane as a helical segment. The Periplasmic segment spans residues 25–74 (RKTDTGSQQGYFLAGRSLKAPVIAASLMLTNLSTEQLVGLSGQAYKSGMS). The helical transmembrane segment at 75–95 (VMGWEVTSAVTLIFLALIFLP) threads the bilayer. Residues 96–118 (RYLKRGIATIPDFLEERYDKTTR) lie on the Cytoplasmic side of the membrane. Residues 119–139 (IIIDFCFLIATGVCFLPIVLY) traverse the membrane as a helical segment. Over 140–162 (SGALALNSLFHVGESLQISHGAA) the chain is Periplasmic. Residues 163–183 (IWLLVILLGLAGILYAVIGGL) form a helical membrane-spanning segment. Topologically, residues 184–191 (RAMAVADS) are cytoplasmic. The helical transmembrane segment at 192–212 (INGIGLVIGGLMVPVFGLIAM) threads the bilayer. Residues 213-240 (GKGSFMQGIEQLTTVHAEKLNSIGGPTD) are Periplasmic-facing. A helical transmembrane segment spans residues 241 to 261 (PLPIGAAFTGLILVNTFYWCT). Residues 262 to 283 (NQGIVQRTLASKSLAEGQKGAL) are Cytoplasmic-facing. A helical membrane pass occupies residues 284 to 304 (LTAVLKMLDPLVLVLPGLIAF). Over 305-324 (HLYQDLPKADMAYPTLVNNV) the chain is Periplasmic. The helical transmembrane segment at 325 to 345 (LPVPMVGFFGAVLFGAVISTF) threads the bilayer. The Cytoplasmic portion of the chain corresponds to 346–380 (NGFLNSASTLFSMGIYRRIINQNAEPQQLVTVGRK). Residues 381-401 (FGFFIAIVSVLVAPWIANAPQ) traverse the membrane as a helical segment. The Periplasmic segment spans residues 402-415 (GLYSWMKQLNGIYN). Residues 416-436 (VPLVTIIIMGFFFPRIPALAA) form a helical membrane-spanning segment. A topological domain (cytoplasmic) is located at residue Lys437. A helical transmembrane segment spans residues 438 to 458 (VAMGIGIISYITINYLVKFDF). The Periplasmic portion of the chain corresponds to 459 to 460 (HF). A helical transmembrane segment spans residues 461–481 (LYVLACTFCINVVVMLVIGFI). The Cytoplasmic portion of the chain corresponds to 482–505 (KPRATPFTFKDAFAVDMKPWKNVK). Residues 506 to 526 (IASIGILFAMIGVYAGLAEFG) form a helical membrane-spanning segment. Over 527–532 (GYGTRW) the chain is Periplasmic. The chain crosses the membrane as a helical span at residues 533 to 553 (LAMISYFIAAVVIVYLIFDSW). Residues 554-571 (RHRHDPAVTFTPDGKDSL) lie on the Cytoplasmic side of the membrane.

The protein belongs to the sodium:solute symporter (SSF) (TC 2.A.21) family.

It localises to the cell inner membrane. This is an uncharacterized protein from Escherichia coli (strain K12).